A 370-amino-acid chain; its full sequence is Lipoyl synthase, mitochondrial (370 aa).

[4Fe-4S] cluster is bound by residues Cys104, Cys109, Cys115, Cys135, Cys139, Cys142, and Ser350. Positions 118–339 constitute a Radical SAM core domain; the sequence is GGDKSKATAT…KQKALELGFL (222 aa).

Belongs to the radical SAM superfamily. Lipoyl synthase family. It depends on [4Fe-4S] cluster as a cofactor.

It is found in the mitochondrion. The catalysed reaction is [[Fe-S] cluster scaffold protein carrying a second [4Fe-4S](2+) cluster] + N(6)-octanoyl-L-lysyl-[protein] + 2 oxidized [2Fe-2S]-[ferredoxin] + 2 S-adenosyl-L-methionine + 4 H(+) = [[Fe-S] cluster scaffold protein] + N(6)-[(R)-dihydrolipoyl]-L-lysyl-[protein] + 4 Fe(3+) + 2 hydrogen sulfide + 2 5'-deoxyadenosine + 2 L-methionine + 2 reduced [2Fe-2S]-[ferredoxin]. It functions in the pathway protein modification; protein lipoylation via endogenous pathway; protein N(6)-(lipoyl)lysine from octanoyl-[acyl-carrier-protein]: step 2/2. Catalyzes the radical-mediated insertion of two sulfur atoms into the C-6 and C-8 positions of the octanoyl moiety bound to the lipoyl domains of lipoate-dependent enzymes, thereby converting the octanoylated domains into lipoylated derivatives. The polypeptide is Lipoyl synthase, mitochondrial (Kluyveromyces lactis (strain ATCC 8585 / CBS 2359 / DSM 70799 / NBRC 1267 / NRRL Y-1140 / WM37) (Yeast)).